Here is a 361-residue protein sequence, read N- to C-terminus: Protein RecA (361 aa).

77-84 (GPESSGKT) provides a ligand contact to ATP.

Belongs to the RecA family.

It localises to the cytoplasm. In terms of biological role, can catalyze the hydrolysis of ATP in the presence of single-stranded DNA, the ATP-dependent uptake of single-stranded DNA by duplex DNA, and the ATP-dependent hybridization of homologous single-stranded DNAs. It interacts with LexA causing its activation and leading to its autocatalytic cleavage. The protein is Protein RecA of Brucella abortus (strain S19).